A 433-amino-acid chain; its full sequence is UDP-N-acetylglucosamine 1-carboxyvinyltransferase 2 (433 aa).

A phosphoenolpyruvate-binding site is contributed by 23–24 (KN). Residue arginine 96 participates in UDP-N-acetyl-alpha-D-glucosamine binding. Cysteine 120 functions as the Proton donor in the catalytic mechanism. Cysteine 120 carries the 2-(S-cysteinyl)pyruvic acid O-phosphothioketal modification. UDP-N-acetyl-alpha-D-glucosamine-binding positions include 125 to 129 (RPIDL), aspartate 308, and valine 330.

It belongs to the EPSP synthase family. MurA subfamily.

It is found in the cytoplasm. The enzyme catalyses phosphoenolpyruvate + UDP-N-acetyl-alpha-D-glucosamine = UDP-N-acetyl-3-O-(1-carboxyvinyl)-alpha-D-glucosamine + phosphate. It functions in the pathway cell wall biogenesis; peptidoglycan biosynthesis. Functionally, cell wall formation. Adds enolpyruvyl to UDP-N-acetylglucosamine. This Enterococcus faecalis (strain ATCC 700802 / V583) protein is UDP-N-acetylglucosamine 1-carboxyvinyltransferase 2.